Consider the following 245-residue polypeptide: Orotidine 5'-phosphate decarboxylase (245 aa).

Residues D22, K44, 71 to 80, T131, R192, Q201, G221, and R222 each bind substrate; that span reads DLKFHDIPNT. K73 serves as the catalytic Proton donor.

It belongs to the OMP decarboxylase family. Type 1 subfamily. In terms of assembly, homodimer.

The enzyme catalyses orotidine 5'-phosphate + H(+) = UMP + CO2. The protein operates within pyrimidine metabolism; UMP biosynthesis via de novo pathway; UMP from orotate: step 2/2. Functionally, catalyzes the decarboxylation of orotidine 5'-monophosphate (OMP) to uridine 5'-monophosphate (UMP). The polypeptide is Orotidine 5'-phosphate decarboxylase (Salmonella typhimurium (strain LT2 / SGSC1412 / ATCC 700720)).